The sequence spans 418 residues: Inner capsid protein sigma-2 (418 aa).

Belongs to the orthoreovirus sigma-1 protein family. In terms of assembly, interacts with protein mu-NS; in viral inclusions.

It is found in the virion. Inner capsid (core) component. This chain is Inner capsid protein sigma-2 (S2), found in Mammalia (T2J).